The primary structure comprises 161 residues: UPF0262 protein Rru_A2770 (161 aa).

Belongs to the UPF0262 family.

In Rhodospirillum rubrum (strain ATCC 11170 / ATH 1.1.1 / DSM 467 / LMG 4362 / NCIMB 8255 / S1), this protein is UPF0262 protein Rru_A2770.